A 256-amino-acid polypeptide reads, in one-letter code: tRNA pseudouridine synthase A (256 aa).

Aspartate 52 functions as the Nucleophile in the catalytic mechanism. Position 111 (tyrosine 111) interacts with substrate.

It belongs to the tRNA pseudouridine synthase TruA family. Homodimer.

It catalyses the reaction uridine(38/39/40) in tRNA = pseudouridine(38/39/40) in tRNA. Functionally, formation of pseudouridine at positions 38, 39 and 40 in the anticodon stem and loop of transfer RNAs. The polypeptide is tRNA pseudouridine synthase A (Paramagnetospirillum magneticum (strain ATCC 700264 / AMB-1) (Magnetospirillum magneticum)).